The primary structure comprises 308 residues: Glutaminase (308 aa).

Residues Ser66, Asn117, Glu161, Asn168, Tyr192, Tyr244, and Val262 each contribute to the substrate site.

This sequence belongs to the glutaminase family. Homotetramer.

It carries out the reaction L-glutamine + H2O = L-glutamate + NH4(+). This is Glutaminase from Salmonella choleraesuis (strain SC-B67).